An 86-amino-acid polypeptide reads, in one-letter code: Kappa-theraphotoxin-Cg1a 3 (86 aa).

A signal peptide spans 1-21; sequence MKVSVLITLAVLGVMFVWASA. A propeptide spanning residues 22 to 50 is cleaved from the precursor; that stretch reads AELEERGSDQRDSPAWLKSMERIFRSEER. Disulfide bonds link cysteine 52-cysteine 66, cysteine 59-cysteine 71, and cysteine 65-cysteine 78. Phenylalanine 84 carries the phenylalanine amide modification.

It belongs to the neurotoxin 10 (Hwtx-1) family. 28 (Jztx-11) subfamily. As to expression, expressed by the venom gland.

The protein resides in the secreted. This toxin acts as a voltage-dependent gating-modifier. It inhibits the sodium conductance (IC(50)=124 nM) and slows the fast inactivation (EC(50)=1180 nM) of Nav1.5/SCN5A. It significantly shifts the activation to more depolarized voltages and decreases the deactivation of Nav1.5 currents upon extreme depolarization, but only slightly affects voltage-dependence of steady-state inactivation. In addition, this toxin causes an approximately five-fold decrease in the rate of recovery from inactivation and an approximately 1.9-fold reduction in the closed-state inactivation rate. This toxin integrates the functions of site 3 toxins (alpha-scorpion toxins) with site 4 toxins (beta-scorpion and spider toxins) by targeting multiple sites on Nav1.5. Also shows inhibition of voltage-gated potassium channels (5 uM completely inhibits Kv2.1/KCNB1, whereas 5 uM moderately inhibits Kv4.2/KCND2 Kv4.1/KCND1 channels). In Chilobrachys guangxiensis (Chinese earth tiger tarantula), this protein is Kappa-theraphotoxin-Cg1a 3.